We begin with the raw amino-acid sequence, 306 residues long: Putative S-adenosyl-L-methionine-dependent methyltransferase MAP_4190c (306 aa).

Residues D129 and 158–159 (DL) contribute to the S-adenosyl-L-methionine site.

Belongs to the UPF0677 family.

Its function is as follows. Exhibits S-adenosyl-L-methionine-dependent methyltransferase activity. The sequence is that of Putative S-adenosyl-L-methionine-dependent methyltransferase MAP_4190c from Mycolicibacterium paratuberculosis (strain ATCC BAA-968 / K-10) (Mycobacterium paratuberculosis).